Consider the following 529-residue polypeptide: MATQMVNQSTGNSLFCTSTYSNISLDNDMYGLHDLSKADMAAPRLIMLANVALTGELSSGCCDYTPEGERQMAELTTVNDNSFSDSEGDRLEDSPSMDIQSHNFIMEMEPAECSKEGTSENDGTLLSNTLEVEVQKDKRTPSPTDDKYKCVKSKPFRCKPCQYKAESEEEFVHHIKIHSAKIYVDNDSNKKAQGNEADSSISEESDVSKGPIQCDRCGYNTNRFDHYLAHLKHHNKAGENERVYKCTICTYTTVSEYHWKKHLRNHYPRILYTCSQCSYFSDRKNNYIQHIRTHTGERPYQCILCPYSSSQKTHLTRHMRTHSGEKPFKCEQCSYVASNQHEVTRHARQVHNGPKPLTCPHCDYKTADRSNFKKHVELHVNPRQFLCPVCDYAASKKCNLQYHIKSRHSGCTNITMDVSKVKLRTKKGDIGVADVDANKQTENGNIIDKSVEETVKAEKRESCGKAKKSIVNLVDGQVAKKRRLSSTQKKIKTSDARPEKILDKSRKSSCVKRKSDLLENSNDTQTSTV.

A C2H2-type 1 zinc finger spans residues 156 to 178 (FRCKPCQYKAESEEEFVHHIKIH). The segment at 188 to 210 (SNKKAQGNEADSSISEESDVSKG) is disordered. 7 consecutive C2H2-type zinc fingers follow at residues 212–234 (IQCD…LKHH), 244–266 (YKCT…LRNH), 272–294 (YTCS…IRTH), 300–322 (YQCI…MRTH), 328–351 (FKCE…RQVH), 357–379 (LTCP…VELH), and 385–408 (FLCP…KSRH). The segment at 484–529 (LSSTQKKIKTSDARPEKILDKSRKSSCVKRKSDLLENSNDTQTSTV) is disordered. Over residues 492–506 (KTSDARPEKILDKSR) the composition is skewed to basic and acidic residues. Residues 518 to 529 (LENSNDTQTSTV) show a composition bias toward polar residues.

Its subcellular location is the nucleus. It is found in the cytoplasm. Its function is as follows. Transcriptional repressor which binds neuron-restrictive silencer element (NRSE) and represses neuronal gene transcription in non-neuronal cells. Plays a role in the early development of the nervous system and is required for proper patterning of the neuroectoderm during gastrulation. This involves the correct speciation of the neuroepithelial domain and adequate development of the non-neural ectoderm. This is RE1-silencing transcription factor B (rest-b) from Xenopus laevis (African clawed frog).